The following is a 327-amino-acid chain: Gibberellin 2-beta-dioxygenase 1 (327 aa).

The Fe2OG dioxygenase domain occupies 171–276; sequence QSDCLFRVNH…RLSMIYFCGP (106 aa). Residues H200, D202, and H257 each contribute to the Fe cation site. Residue R267 is part of the active site.

It belongs to the iron/ascorbate-dependent oxidoreductase family. GA2OX subfamily. Fe cation is required as a cofactor. In terms of tissue distribution, predominantly expressed in roots, flowers, young fruits and seeds.

The catalysed reaction is gibberellin A1 + 2-oxoglutarate + O2 = gibberellin A8 + succinate + CO2. It functions in the pathway plant hormone biosynthesis; gibberellin biosynthesis. Its function is as follows. Catalyzes the 2-beta-hydroxylation of several biologically active gibberellins, leading to the homeostatic regulation of their endogenous level. Catabolism of gibberellins (GAs) plays a central role in plant development. Converts GA9/GA20 to GA51/GA29 and GA4/GA1 to GA34/GA8. In Pisum sativum (Garden pea), this protein is Gibberellin 2-beta-dioxygenase 1 (GA2OX1).